The primary structure comprises 170 residues: Dual-action ribosomal maturation protein DarP (170 aa).

This sequence belongs to the DarP family.

It is found in the cytoplasm. Its function is as follows. Member of a network of 50S ribosomal subunit biogenesis factors which assembles along the 30S-50S interface, preventing incorrect 23S rRNA structures from forming. Promotes peptidyl transferase center (PTC) maturation. This Neisseria meningitidis serogroup A / serotype 4A (strain DSM 15465 / Z2491) protein is Dual-action ribosomal maturation protein DarP.